Here is a 449-residue protein sequence, read N- to C-terminus: Cysteine--tRNA ligase (449 aa).

Cys30 provides a ligand contact to Zn(2+). The 'HIGH' region motif lies at 32-42 (PTVYDRAHLGN). Residues Cys210, His235, and Glu239 each contribute to the Zn(2+) site. The 'KMSKS' region motif lies at 268–272 (KMSKS). Residue Lys271 participates in ATP binding.

The protein belongs to the class-I aminoacyl-tRNA synthetase family. Monomer. The cofactor is Zn(2+).

It localises to the cytoplasm. The enzyme catalyses tRNA(Cys) + L-cysteine + ATP = L-cysteinyl-tRNA(Cys) + AMP + diphosphate. The chain is Cysteine--tRNA ligase from Acidiphilium cryptum (strain JF-5).